The primary structure comprises 417 residues: GTP-binding protein YPT11 (417 aa).

Positions 1-34 (MSQRKRYSLNVVTSPSIPSPTPSAPIRTNESNWE) are disordered. Residues 97 to 104 (GDANVGKT), 228 to 232 (DTAGQ), and 292 to 295 (NKID) each bind GTP. Residues cysteine 415 and cysteine 416 are each lipidated (S-geranylgeranyl cysteine).

This sequence belongs to the small GTPase superfamily. Rab family. As to quaternary structure, interacts with MYO2 (via C-terminal tail domain). Interacts with YIF1, YIP3, YIP4 and YIP5.

It localises to the endoplasmic reticulum membrane. The protein localises to the bud tip. It is found in the bud neck. In terms of biological role, involved in the positive control of both endoplasmic reticulum (ER) and mitochondrion inheritance during cell divison. Required for the MYO2-dependent retention of newly inherited mitochondria at the bud tip in developing daughter cells. The sequence is that of GTP-binding protein YPT11 (YPT11) from Saccharomyces cerevisiae (strain RM11-1a) (Baker's yeast).